The primary structure comprises 464 residues: Kynureninase 2 (464 aa).

Pyridoxal 5'-phosphate is bound by residues Leu-135, Thr-136, 163–166 (FPSD), Asp-248, His-251, and Tyr-273. N6-(pyridoxal phosphate)lysine is present on Lys-274. Pyridoxal 5'-phosphate is bound by residues Trp-313 and Asn-341.

This sequence belongs to the kynureninase family. As to quaternary structure, homodimer. Requires pyridoxal 5'-phosphate as cofactor.

Its subcellular location is the cytoplasm. It carries out the reaction L-kynurenine + H2O = anthranilate + L-alanine + H(+). The catalysed reaction is 3-hydroxy-L-kynurenine + H2O = 3-hydroxyanthranilate + L-alanine + H(+). It participates in amino-acid degradation; L-kynurenine degradation; L-alanine and anthranilate from L-kynurenine: step 1/1. Its pathway is cofactor biosynthesis; NAD(+) biosynthesis; quinolinate from L-kynurenine: step 2/3. Its function is as follows. Catalyzes the cleavage of L-kynurenine (L-Kyn) and L-3-hydroxykynurenine (L-3OHKyn) into anthranilic acid (AA) and 3-hydroxyanthranilic acid (3-OHAA), respectively. The chain is Kynureninase 2 (bna5-2) from Aspergillus fumigatus (strain CBS 144.89 / FGSC A1163 / CEA10) (Neosartorya fumigata).